Consider the following 111-residue polypeptide: Small ribosomal subunit protein bS16 (111 aa).

Residues 92 to 111 form a disordered region; the sequence is MEVKAKNRKARPSKKEDKEA.

Belongs to the bacterial ribosomal protein bS16 family.

The protein is Small ribosomal subunit protein bS16 of Rickettsia massiliae (strain Mtu5).